The chain runs to 221 residues: Eukaryotic translation initiation factor 3 subunit K (221 aa).

A PCI domain is found at 46–215; it reads YDLEANLACL…EKIEFDNLAP (170 aa).

Belongs to the eIF-3 subunit K family. As to quaternary structure, component of the eukaryotic translation initiation factor 3 (eIF-3) complex.

It localises to the cytoplasm. Its function is as follows. Component of the eukaryotic translation initiation factor 3 (eIF-3) complex, which is involved in protein synthesis of a specialized repertoire of mRNAs and, together with other initiation factors, stimulates binding of mRNA and methionyl-tRNAi to the 40S ribosome. The eIF-3 complex specifically targets and initiates translation of a subset of mRNAs involved in cell proliferation. The chain is Eukaryotic translation initiation factor 3 subunit K from Anopheles gambiae (African malaria mosquito).